The primary structure comprises 308 residues: Protoheme IX farnesyltransferase (308 aa).

The next 8 helical transmembrane spans lie at 31–51 (VIELLLVTAIPAMLLAQRGTV), 53–73 (PLLIVNTLIGGMLAAGGANAL), 102–122 (NALVFGLVLTAGSFLWLWWTT), 124–144 (LLSGLLALATIAFYVFIYTLL), 149–169 (TSQNVVWGGAAGCMPVMIGWS), 170–190 (AVTGTIQWPALVMFAIIFFWT), 240–260 (LALATGWLYAAVALVAGVWFL), and 288–308 (YLAVVFCALAIDSAIGLPHLF).

The protein belongs to the UbiA prenyltransferase family. Protoheme IX farnesyltransferase subfamily.

It localises to the cell membrane. It carries out the reaction heme b + (2E,6E)-farnesyl diphosphate + H2O = Fe(II)-heme o + diphosphate. It participates in porphyrin-containing compound metabolism; heme O biosynthesis; heme O from protoheme: step 1/1. In terms of biological role, converts heme B (protoheme IX) to heme O by substitution of the vinyl group on carbon 2 of heme B porphyrin ring with a hydroxyethyl farnesyl side group. The chain is Protoheme IX farnesyltransferase from Mycolicibacterium paratuberculosis (strain ATCC BAA-968 / K-10) (Mycobacterium paratuberculosis).